We begin with the raw amino-acid sequence, 255 residues long: Pyridoxine 5'-phosphate synthase (255 aa).

Asn-6 is a binding site for 3-amino-2-oxopropyl phosphate. 8–9 (DH) is a 1-deoxy-D-xylulose 5-phosphate binding site. Residue Arg-17 coordinates 3-amino-2-oxopropyl phosphate. His-41 acts as the Proton acceptor in catalysis. 1-deoxy-D-xylulose 5-phosphate contacts are provided by Arg-43 and His-48. The active-site Proton acceptor is Glu-68. Thr-96 is a 1-deoxy-D-xylulose 5-phosphate binding site. The active-site Proton donor is the His-208. Residues Gly-209 and 230-231 (GQ) each bind 3-amino-2-oxopropyl phosphate.

Belongs to the PNP synthase family. As to quaternary structure, homooctamer; tetramer of dimers.

It localises to the cytoplasm. The catalysed reaction is 3-amino-2-oxopropyl phosphate + 1-deoxy-D-xylulose 5-phosphate = pyridoxine 5'-phosphate + phosphate + 2 H2O + H(+). The protein operates within cofactor biosynthesis; pyridoxine 5'-phosphate biosynthesis; pyridoxine 5'-phosphate from D-erythrose 4-phosphate: step 5/5. Catalyzes the complicated ring closure reaction between the two acyclic compounds 1-deoxy-D-xylulose-5-phosphate (DXP) and 3-amino-2-oxopropyl phosphate (1-amino-acetone-3-phosphate or AAP) to form pyridoxine 5'-phosphate (PNP) and inorganic phosphate. This chain is Pyridoxine 5'-phosphate synthase, found in Campylobacter lari (strain RM2100 / D67 / ATCC BAA-1060).